A 177-amino-acid polypeptide reads, in one-letter code: ATP synthase subunit delta (177 aa).

This sequence belongs to the ATPase delta chain family. F-type ATPases have 2 components, F(1) - the catalytic core - and F(0) - the membrane proton channel. F(1) has five subunits: alpha(3), beta(3), gamma(1), delta(1), epsilon(1). F(0) has three main subunits: a(1), b(2) and c(10-14). The alpha and beta chains form an alternating ring which encloses part of the gamma chain. F(1) is attached to F(0) by a central stalk formed by the gamma and epsilon chains, while a peripheral stalk is formed by the delta and b chains.

It is found in the cell inner membrane. In terms of biological role, f(1)F(0) ATP synthase produces ATP from ADP in the presence of a proton or sodium gradient. F-type ATPases consist of two structural domains, F(1) containing the extramembraneous catalytic core and F(0) containing the membrane proton channel, linked together by a central stalk and a peripheral stalk. During catalysis, ATP synthesis in the catalytic domain of F(1) is coupled via a rotary mechanism of the central stalk subunits to proton translocation. This protein is part of the stalk that links CF(0) to CF(1). It either transmits conformational changes from CF(0) to CF(1) or is implicated in proton conduction. The protein is ATP synthase subunit delta of Colwellia psychrerythraea (strain 34H / ATCC BAA-681) (Vibrio psychroerythus).